We begin with the raw amino-acid sequence, 210 residues long: Uridine kinase (210 aa).

Position 14–21 (14–21 (GGSGSGKT)) interacts with ATP.

It belongs to the uridine kinase family.

Its subcellular location is the cytoplasm. The catalysed reaction is uridine + ATP = UMP + ADP + H(+). The enzyme catalyses cytidine + ATP = CMP + ADP + H(+). It functions in the pathway pyrimidine metabolism; CTP biosynthesis via salvage pathway; CTP from cytidine: step 1/3. It participates in pyrimidine metabolism; UMP biosynthesis via salvage pathway; UMP from uridine: step 1/1. The chain is Uridine kinase from Deinococcus radiodurans (strain ATCC 13939 / DSM 20539 / JCM 16871 / CCUG 27074 / LMG 4051 / NBRC 15346 / NCIMB 9279 / VKM B-1422 / R1).